Consider the following 385-residue polypeptide: DNA replication and repair protein RecF (385 aa).

30 to 37 is a binding site for ATP; sequence GANAAGKT.

It belongs to the RecF family.

It localises to the cytoplasm. Its function is as follows. The RecF protein is involved in DNA metabolism; it is required for DNA replication and normal SOS inducibility. RecF binds preferentially to single-stranded, linear DNA. It also seems to bind ATP. The sequence is that of DNA replication and repair protein RecF from Herpetosiphon aurantiacus (strain ATCC 23779 / DSM 785 / 114-95).